The chain runs to 359 residues: 2-epi-5-epi-valiolone 7-kinase (359 aa).

Residues 28–48 form a disordered region; that stretch reads GGLGEVHTTPSPGHARRPGAG.

The protein belongs to the ROK (NagC/XylR) family.

It carries out the reaction 2-epi-5-epi-valiolone + ATP = 2-epi-5-epi-valiolone 7-phosphate + ADP + H(+). Its function is as follows. Catalyzes the conversion of 2-epi-5-epi-valiolone to 2-epi-5-epi-valiolone 7-phosphate. Involved in the biosynthesis of the acarviose moiety of the alpha-glucosidase inhibitor acarbose. The chain is 2-epi-5-epi-valiolone 7-kinase from Actinoplanes sp. (strain ATCC 31044 / CBS 674.73 / SE50/110).